The following is a 217-amino-acid chain: Adenylate kinase (217 aa).

10-15 (GAGKGT) is an ATP binding site. The interval 30–59 (STGDMLRAAVKAGSPLGVKVKDIMASGQLV) is NMP. AMP contacts are provided by residues T31, R36, 57 to 59 (QLV), 85 to 88 (GFPR), and Q92. The LID stretch occupies residues 122-159 (GRRVHEASGRIYHVTHNPPKTEGVDDITGEPLVQRDDD). ATP is bound by residues R123 and 132–133 (IY). Positions 156 and 167 each coordinate AMP. G202 provides a ligand contact to ATP.

Belongs to the adenylate kinase family. As to quaternary structure, monomer.

The protein resides in the cytoplasm. The catalysed reaction is AMP + ATP = 2 ADP. The protein operates within purine metabolism; AMP biosynthesis via salvage pathway; AMP from ADP: step 1/1. In terms of biological role, catalyzes the reversible transfer of the terminal phosphate group between ATP and AMP. Plays an important role in cellular energy homeostasis and in adenine nucleotide metabolism. The protein is Adenylate kinase of Teredinibacter turnerae (strain ATCC 39867 / T7901).